The following is a 173-amino-acid chain: Enhancer of split mdelta protein (173 aa).

The bHLH domain occupies 15–72; the sequence is YRKVTKPLLERKRRARMNLYLDELKDLIVDTMDAQGEQVSKLEKADILELTVNYLKAQ. The Orange domain maps to 93-126; sequence FRAGYTQAAYEVSHIFSTVPGLDLKFGTHLMKQL. A disordered region spans residues 147 to 173; sequence VNLADQKRSKSPREEDIHHGEEVWRPW. Over residues 151-173 the composition is skewed to basic and acidic residues; it reads DQKRSKSPREEDIHHGEEVWRPW. A WRPW motif motif is present at residues 170–173; the sequence is WRPW.

As to quaternary structure, transcription repression requires formation of a complex with a corepressor protein (Groucho).

The protein localises to the nucleus. In terms of biological role, transcriptional repressor of genes that require a bHLH protein for their transcription. May serve as a transcriptional regulator of the Achaete-scute complex (AS-C) genes. Contributes to the neural-epidermal lineage decision during early neurogenesis. As part of the Notch signaling pathway, required to maintain the self-renewal and identity of type II neuroblasts by regulating the expression of the transcriptional repressor erm. This chain is Enhancer of split mdelta protein, found in Drosophila melanogaster (Fruit fly).